Here is an 81-residue protein sequence, read N- to C-terminus: ATP synthase subunit c (81 aa).

Helical transmembrane passes span 6 to 26 (AAASVIAAALAVGLGAIGPGI) and 57 to 77 (LAFMESLTIYGLVIALVLLFA).

The protein belongs to the ATPase C chain family. As to quaternary structure, F-type ATPases have 2 components, F(1) - the catalytic core - and F(0) - the membrane proton channel. F(1) has five subunits: alpha(3), beta(3), gamma(1), delta(1), epsilon(1). F(0) has four main subunits: a(1), b(1), b'(1) and c(10-14). The alpha and beta chains form an alternating ring which encloses part of the gamma chain. F(1) is attached to F(0) by a central stalk formed by the gamma and epsilon chains, while a peripheral stalk is formed by the delta, b and b' chains.

Its subcellular location is the cellular thylakoid membrane. Its function is as follows. F(1)F(0) ATP synthase produces ATP from ADP in the presence of a proton or sodium gradient. F-type ATPases consist of two structural domains, F(1) containing the extramembraneous catalytic core and F(0) containing the membrane proton channel, linked together by a central stalk and a peripheral stalk. During catalysis, ATP synthesis in the catalytic domain of F(1) is coupled via a rotary mechanism of the central stalk subunits to proton translocation. Functionally, key component of the F(0) channel; it plays a direct role in translocation across the membrane. A homomeric c-ring of between 10-14 subunits forms the central stalk rotor element with the F(1) delta and epsilon subunits. This is ATP synthase subunit c from Synechocystis sp. (strain ATCC 27184 / PCC 6803 / Kazusa).